A 1012-amino-acid chain; its full sequence is Autotransporter adhesin BpaC (1012 aa).

The signal sequence occupies residues 1–71 (MNRIFKSIWC…PFAEEAMAAN (71 aa)). The tract at residues 72 to 921 (NAGVCLTYNG…VGQLNSAVSG (850 aa)) is surface exposed passenger domain. 2 disordered regions span residues 420 to 746 (GLQG…AGAT) and 785 to 809 (ENST…ESAA). The span at 427–442 (ANTGTASGDNSTASGD) shows a compositional bias: polar residues. Over residues 443–504 (NATASGTNST…ANGTNSTASG (62 aa)) the composition is skewed to low complexity. Polar residues predominate over residues 505 to 519 (DNSTASGTNASATGE). A compositionally biased stretch (low complexity) spans 520-588 (NSTATGTDST…ANGTNSTASG (69 aa)). A compositionally biased stretch (polar residues) spans 589–603 (DNSTASGTNASATGE). Positions 604–630 (NSTATGTDSTASGSNSTANGTNSTASG) are enriched in low complexity. Positions 631-645 (DNSTASGTNASATGE) are enriched in polar residues. 2 stretches are compositionally biased toward low complexity: residues 646-700 (NSTA…TASG) and 708-746 (TNAS…AGAT). The outer membrane translocation of the passenger domain stretch occupies residues 922-959 (IRNQMDGMQGQIDTLARDAYSGIAAATALTMIPDVDPG). A translocator domain region spans residues 960-1012 (KTLAVGIGTANFKGYQASALGATARITQNLKVKTGVSYSGSNYVWGAGMSYQW).

This sequence belongs to the autotransporter-2 (AT-2) (TC 1.B.40) family. In terms of assembly, homotrimer.

The protein localises to the cell surface. Its subcellular location is the cell outer membrane. In terms of biological role, involved in virulence. Mediates adherence to human respiratory epithelial cells. The sequence is that of Autotransporter adhesin BpaC from Burkholderia mallei (strain ATCC 23344).